Here is a 62-residue protein sequence, read N- to C-terminus: Photosystem II reaction center protein Z (62 aa).

Transmembrane regions (helical) follow at residues 8–28 (TLFA…VVFA) and 41–61 (FSGI…NSFV).

This sequence belongs to the PsbZ family. As to quaternary structure, PSII is composed of 1 copy each of membrane proteins PsbA, PsbB, PsbC, PsbD, PsbE, PsbF, PsbH, PsbI, PsbJ, PsbK, PsbL, PsbM, PsbT, PsbY, PsbZ, Psb30/Ycf12, at least 3 peripheral proteins of the oxygen-evolving complex and a large number of cofactors. It forms dimeric complexes.

The protein resides in the plastid. It is found in the chloroplast thylakoid membrane. In terms of biological role, may control the interaction of photosystem II (PSII) cores with the light-harvesting antenna, regulates electron flow through the 2 photosystem reaction centers. PSII is a light-driven water plastoquinone oxidoreductase, using light energy to abstract electrons from H(2)O, generating a proton gradient subsequently used for ATP formation. The polypeptide is Photosystem II reaction center protein Z (Tupiella akineta (Green alga)).